The primary structure comprises 375 residues: DNA replication and repair protein RecF (375 aa).

30–37 lines the ATP pocket; sequence GENAQGKT.

This sequence belongs to the RecF family.

It localises to the cytoplasm. Its function is as follows. The RecF protein is involved in DNA metabolism; it is required for DNA replication and normal SOS inducibility. RecF binds preferentially to single-stranded, linear DNA. It also seems to bind ATP. The sequence is that of DNA replication and repair protein RecF from Enterococcus faecalis (strain ATCC 700802 / V583).